The primary structure comprises 64 residues: Large ribosomal subunit protein bL28 (64 aa).

It belongs to the bacterial ribosomal protein bL28 family.

This chain is Large ribosomal subunit protein bL28, found in Persephonella marina (strain DSM 14350 / EX-H1).